A 305-amino-acid polypeptide reads, in one-letter code: Acetyl-coenzyme A carboxylase carboxyl transferase subunit beta (305 aa).

Positions 27 to 296 (LWVKCSACRE…PAAKADLAAR (270 aa)) constitute a CoA carboxyltransferase N-terminal domain. Cys-31, Cys-34, Cys-50, and Cys-53 together coordinate Zn(2+). The C4-type zinc-finger motif lies at 31 to 53 (CSACRELIYKKQLNDNLKVCPKC).

Belongs to the AccD/PCCB family. In terms of assembly, acetyl-CoA carboxylase is a heterohexamer composed of biotin carboxyl carrier protein (AccB), biotin carboxylase (AccC) and two subunits each of ACCase subunit alpha (AccA) and ACCase subunit beta (AccD). Zn(2+) serves as cofactor.

Its subcellular location is the cytoplasm. The catalysed reaction is N(6)-carboxybiotinyl-L-lysyl-[protein] + acetyl-CoA = N(6)-biotinyl-L-lysyl-[protein] + malonyl-CoA. The protein operates within lipid metabolism; malonyl-CoA biosynthesis; malonyl-CoA from acetyl-CoA: step 1/1. Its function is as follows. Component of the acetyl coenzyme A carboxylase (ACC) complex. Biotin carboxylase (BC) catalyzes the carboxylation of biotin on its carrier protein (BCCP) and then the CO(2) group is transferred by the transcarboxylase to acetyl-CoA to form malonyl-CoA. This chain is Acetyl-coenzyme A carboxylase carboxyl transferase subunit beta, found in Chloroflexus aggregans (strain MD-66 / DSM 9485).